We begin with the raw amino-acid sequence, 796 residues long: Cation/H(+) antiporter 6B (796 aa).

The next 13 membrane-spanning stretches (helical) occupy residues 54–74 (DFWE…FLLW), 93–113 (SMML…IPCL), 131–151 (IGAF…DVGI), 159–179 (SVVI…LLYS), 194–213 (YTVM…NMLL), 223–243 (FGQI…FLTV), 259–279 (LAFM…LWVI), 285–305 (GAPV…LSYL), 310–330 (FLFF…NGPP), 344–364 (EGIF…WSFL), 382–402 (FSFL…AALA), 411–431 (IILG…VLTA), and 444–464 (LLGV…HFLY).

This sequence belongs to the monovalent cation:proton antiporter 2 (CPA2) transporter (TC 2.A.37) family. CHX (TC 2.A.37.4) subfamily. Preferentially expressed in pollen.

The protein resides in the membrane. In terms of biological role, may operate as a cation/H(+) antiporter. This Arabidopsis thaliana (Mouse-ear cress) protein is Cation/H(+) antiporter 6B (CHX6b).